Reading from the N-terminus, the 218-residue chain is Small ribosomal subunit protein uS3c (218 aa).

In terms of domain architecture, KH type-2 spans 47-118 (VQKNMKTSSG…KLNIAITRIE (72 aa)).

Belongs to the universal ribosomal protein uS3 family. Part of the 30S ribosomal subunit.

Its subcellular location is the plastid. The protein localises to the chloroplast. The sequence is that of Small ribosomal subunit protein uS3c (rps3) from Lactuca sativa (Garden lettuce).